Reading from the N-terminus, the 396-residue chain is Elongation factor Tu 1 (396 aa).

The tr-type G domain maps to 10–206 (KLHVNVGTIG…ALDTFIPDPT (197 aa)). Residues 19–26 (GHVDHGKT) are G1. GTP is bound at residue 19 to 26 (GHVDHGKT). T26 contributes to the Mg(2+) binding site. Positions 60–64 (GITIS) are G2. Residues 81-84 (DCPG) are G3. GTP-binding positions include 81–85 (DCPGH) and 136–139 (NKAD). Residues 136 to 139 (NKAD) are G4. The G5 stretch occupies residues 174 to 176 (SAR).

It belongs to the TRAFAC class translation factor GTPase superfamily. Classic translation factor GTPase family. EF-Tu/EF-1A subfamily. As to quaternary structure, monomer.

It localises to the cytoplasm. The catalysed reaction is GTP + H2O = GDP + phosphate + H(+). In terms of biological role, GTP hydrolase that promotes the GTP-dependent binding of aminoacyl-tRNA to the A-site of ribosomes during protein biosynthesis. The chain is Elongation factor Tu 1 from Xanthomonas campestris pv. campestris (strain B100).